Reading from the N-terminus, the 173-residue chain is ATP-dependent protease subunit HslV (173 aa).

The active site involves T2. The Na(+) site is built by G157, C160, and T163.

It belongs to the peptidase T1B family. HslV subfamily. In terms of assembly, a double ring-shaped homohexamer of HslV is capped on each side by a ring-shaped HslU homohexamer. The assembly of the HslU/HslV complex is dependent on binding of ATP.

Its subcellular location is the cytoplasm. The enzyme catalyses ATP-dependent cleavage of peptide bonds with broad specificity.. With respect to regulation, allosterically activated by HslU binding. Protease subunit of a proteasome-like degradation complex believed to be a general protein degrading machinery. The chain is ATP-dependent protease subunit HslV from Nitrosomonas eutropha (strain DSM 101675 / C91 / Nm57).